The sequence spans 221 residues: MSSPISGFLRFVAVLLAVVSPLVYLAEQRLESFYVFDHKHLHELSTQAIAQHGNNTRAIVGHIVDELRARPETTKYISVQEEWVFNNAGGAMGGMYIIHASVTEYLIIFGTAIGTEGHTGRHTADDYFNILTGEQWAYVPGEYEPEVYPAGSVHHLRRGTVKQYKMPEGCFALEYARGWIPPMLFFGFADGLSSTLDFPTLWQTTVVTGREMLGNLMLGKF.

Residues Ile5 to Leu25 form a helical membrane-spanning segment.

The protein belongs to the ERG2 family.

Its subcellular location is the endoplasmic reticulum membrane. It participates in steroid metabolism; ergosterol biosynthesis; ergosterol from zymosterol: step 2/5. Its function is as follows. Catalyzes the reaction which results in unsaturation at C-7 in the B ring of sterols. The protein is C-8 sterol isomerase (ERG2) of Pyricularia oryzae (strain 70-15 / ATCC MYA-4617 / FGSC 8958) (Rice blast fungus).